The chain runs to 111 residues: Cytochrome b-c1 complex subunit 7 (111 aa).

Ala-2 bears the N-acetylalanine mark. Lys-12 carries the N6-acetyllysine; alternate modification. Lys-12 bears the N6-succinyllysine; alternate mark. N6-acetyllysine is present on Lys-19. Lys-78 bears the N6-acetyllysine; alternate mark. The residue at position 78 (Lys-78) is an N6-succinyllysine; alternate. An N6-acetyllysine modification is found at Lys-83. At Lys-88 the chain carries N6-acetyllysine; alternate. Lys-88 is subject to N6-succinyllysine; alternate. An N6-acetyllysine modification is found at Lys-96.

It belongs to the UQCRB/QCR7 family. As to quaternary structure, component of the ubiquinol-cytochrome c oxidoreductase (cytochrome b-c1 complex, complex III, CIII), a multisubunit enzyme composed of 11 subunits. The complex is composed of 3 respiratory subunits cytochrome b, cytochrome c1 and Rieske protein UQCRFS1, 2 core protein subunits UQCRC1/QCR1 and UQCRC2/QCR2, and 6 low-molecular weight protein subunits UQCRH/QCR6, UQCRB/QCR7, UQCRQ/QCR8, UQCR10/QCR9, UQCR11/QCR10 and subunit 9, the cleavage product of Rieske protein UQCRFS1. The complex exists as an obligatory dimer and forms supercomplexes (SCs) in the inner mitochondrial membrane with NADH-ubiquinone oxidoreductase (complex I, CI) and cytochrome c oxidase (complex IV, CIV), resulting in different assemblies (supercomplex SCI(1)III(2)IV(1) and megacomplex MCI(2)III(2)IV(2)).

It localises to the mitochondrion inner membrane. Component of the ubiquinol-cytochrome c oxidoreductase, a multisubunit transmembrane complex that is part of the mitochondrial electron transport chain which drives oxidative phosphorylation. The respiratory chain contains 3 multisubunit complexes succinate dehydrogenase (complex II, CII), ubiquinol-cytochrome c oxidoreductase (cytochrome b-c1 complex, complex III, CIII) and cytochrome c oxidase (complex IV, CIV), that cooperate to transfer electrons derived from NADH and succinate to molecular oxygen, creating an electrochemical gradient over the inner membrane that drives transmembrane transport and the ATP synthase. The cytochrome b-c1 complex catalyzes electron transfer from ubiquinol to cytochrome c, linking this redox reaction to translocation of protons across the mitochondrial inner membrane, with protons being carried across the membrane as hydrogens on the quinol. In the process called Q cycle, 2 protons are consumed from the matrix, 4 protons are released into the intermembrane space and 2 electrons are passed to cytochrome c. The protein is Cytochrome b-c1 complex subunit 7 (Uqcrb) of Mus musculus (Mouse).